Reading from the N-terminus, the 200-residue chain is Imidazole glycerol phosphate synthase subunit HisH (200 aa).

In terms of domain architecture, Glutamine amidotransferase type-1 spans 3-200; sequence DVALIDAGGA…LRNFLEMSFP (198 aa). Cys78 functions as the Nucleophile in the catalytic mechanism. Active-site residues include His179 and Glu181.

As to quaternary structure, heterodimer of HisH and HisF.

Its subcellular location is the cytoplasm. The enzyme catalyses 5-[(5-phospho-1-deoxy-D-ribulos-1-ylimino)methylamino]-1-(5-phospho-beta-D-ribosyl)imidazole-4-carboxamide + L-glutamine = D-erythro-1-(imidazol-4-yl)glycerol 3-phosphate + 5-amino-1-(5-phospho-beta-D-ribosyl)imidazole-4-carboxamide + L-glutamate + H(+). It carries out the reaction L-glutamine + H2O = L-glutamate + NH4(+). Its pathway is amino-acid biosynthesis; L-histidine biosynthesis; L-histidine from 5-phospho-alpha-D-ribose 1-diphosphate: step 5/9. In terms of biological role, IGPS catalyzes the conversion of PRFAR and glutamine to IGP, AICAR and glutamate. The HisH subunit catalyzes the hydrolysis of glutamine to glutamate and ammonia as part of the synthesis of IGP and AICAR. The resulting ammonia molecule is channeled to the active site of HisF. This Xanthomonas euvesicatoria pv. vesicatoria (strain 85-10) (Xanthomonas campestris pv. vesicatoria) protein is Imidazole glycerol phosphate synthase subunit HisH.